The sequence spans 340 residues: CRISPR-associated protein Cas7 (340 aa).

As to quaternary structure, component of the Cascade-like complex (Cascade I-B), composed of Cas5, Cas6, Cas7 and crRNA.

Its subcellular location is the cytoplasm. CRISPR (clustered regularly interspaced short palindromic repeat) is an adaptive immune system that provides protection against mobile genetic elements (viruses, transposable elements and conjugative plasmids). CRISPR clusters contain sequences complementary to antecedent mobile elements and target invading nucleic acids. CRISPR clusters are transcribed and processed into CRISPR RNA (crRNA). Plasmid targeted by CRISPR locus P1 transform wild-type cells very poorly. This protein helps process or stabilize pre-crRNA into individual crRNA units, in vivo Cas6 and Cas7 are also required for optimal crRNA processing and/or stability. The sequence is that of CRISPR-associated protein Cas7 from Haloferax volcanii (strain ATCC 29605 / DSM 3757 / JCM 8879 / NBRC 14742 / NCIMB 2012 / VKM B-1768 / DS2) (Halobacterium volcanii).